The primary structure comprises 474 residues: MKTMKRVKTVATRLSDFGKWYTDICLKAELIAYSEAKGFIIYLPYGYALWENIQKHLNCTLQKTGHQNVYFPLVFPEKLFHKEKEHIQGFSPEAAMITTTGKKNLSEKLVIRPTSEILFSQYYSKTITSYRDLPKLYNQWCNVVRWEKTTKPFLRGKEFLWQEGHTVHATEQEAMQQTLSILDIYQKLGKDLLALPFVCGKKTETEKFAGALITYSIEALMHDGQALQAGTSHYLGIIFAKSFQIQFQDCDNQKKYAHQTSWGVSTRLIGALIMVHSDDEGLVLPPYVAPMQIVIIPLQTQDESVKQVSENLFSILQKNYRVHLDLQDKTAGWKFSQYELKGVPLRIEIGKRGLENDEVTIFQRYNFAKQNIKIKDFPSQIPQLFETMHNNMYQKALQHLEQNRKQATTYEEFKTYLKQGGYVAMSISGTDAELQIKQETGATARVILETNLITANCPVTNKKALQTVLFARAY.

Belongs to the class-II aminoacyl-tRNA synthetase family. ProS type 3 subfamily. As to quaternary structure, homodimer.

The protein resides in the cytoplasm. The enzyme catalyses tRNA(Pro) + L-proline + ATP = L-prolyl-tRNA(Pro) + AMP + diphosphate. In terms of biological role, catalyzes the attachment of proline to tRNA(Pro) in a two-step reaction: proline is first activated by ATP to form Pro-AMP and then transferred to the acceptor end of tRNA(Pro). The protein is Proline--tRNA ligase of Aster yellows witches'-broom phytoplasma (strain AYWB).